Consider the following 369-residue polypeptide: UDP-N-acetylglucosamine--N-acetylmuramyl-(pentapeptide) pyrophosphoryl-undecaprenol N-acetylglucosamine transferase (369 aa).

UDP-N-acetyl-alpha-D-glucosamine-binding positions include 15 to 17, Asn-126, Arg-169, Ser-197, and Gln-299; that span reads TGG.

The protein belongs to the glycosyltransferase 28 family. MurG subfamily.

It is found in the cell inner membrane. It catalyses the reaction di-trans,octa-cis-undecaprenyl diphospho-N-acetyl-alpha-D-muramoyl-L-alanyl-D-glutamyl-meso-2,6-diaminopimeloyl-D-alanyl-D-alanine + UDP-N-acetyl-alpha-D-glucosamine = di-trans,octa-cis-undecaprenyl diphospho-[N-acetyl-alpha-D-glucosaminyl-(1-&gt;4)]-N-acetyl-alpha-D-muramoyl-L-alanyl-D-glutamyl-meso-2,6-diaminopimeloyl-D-alanyl-D-alanine + UDP + H(+). It functions in the pathway cell wall biogenesis; peptidoglycan biosynthesis. Cell wall formation. Catalyzes the transfer of a GlcNAc subunit on undecaprenyl-pyrophosphoryl-MurNAc-pentapeptide (lipid intermediate I) to form undecaprenyl-pyrophosphoryl-MurNAc-(pentapeptide)GlcNAc (lipid intermediate II). This Methylorubrum extorquens (strain CM4 / NCIMB 13688) (Methylobacterium extorquens) protein is UDP-N-acetylglucosamine--N-acetylmuramyl-(pentapeptide) pyrophosphoryl-undecaprenol N-acetylglucosamine transferase.